A 346-amino-acid polypeptide reads, in one-letter code: 4-amino-5-hydroxymethyl-2-methylpyrimidine phosphate synthase (346 aa).

Residue Lys-62 is modified to N6-(pyridoxal phosphate)lysine. Residue His-66 is part of the active site. 114-117 (GEFG) is a binding site for pyridoxal 5'-phosphate. The CCCFC; essential for catalytic activity, may be the site of iron coordination motif lies at 194-198 (CCCFC).

The protein belongs to the NMT1/THI5 family. In terms of assembly, homodimer. Fe cation serves as cofactor.

The protein resides in the cytoplasm. It is found in the nucleus. The catalysed reaction is N(6)-(pyridoxal phosphate)-L-lysyl-[4-amino-5-hydroxymethyl-2-methylpyrimidine phosphate synthase] + L-histidyl-[4-amino-5-hydroxymethyl-2-methylpyrimidine phosphate synthase] + 2 Fe(3+) + 4 H2O = L-lysyl-[4-amino-5-hydroxymethyl-2-methylpyrimidine phosphate synthase] + (2S)-2-amino-5-hydroxy-4-oxopentanoyl-[4-amino-5-hydroxymethyl-2-methylpyrimidine phosphate synthase] + 4-amino-2-methyl-5-(phosphooxymethyl)pyrimidine + 3-oxopropanoate + 2 Fe(2+) + 2 H(+). Its pathway is cofactor biosynthesis; thiamine diphosphate biosynthesis. Responsible for the formation of the pyrimidine heterocycle in the thiamine biosynthesis pathway. Catalyzes the formation of hydroxymethylpyrimidine phosphate (HMP-P) from histidine and pyridoxal phosphate (PLP). The protein uses PLP and the active site histidine to form HMP-P, generating an inactive enzyme. The enzyme can only undergo a single turnover, which suggests it is a suicide enzyme. The chain is 4-amino-5-hydroxymethyl-2-methylpyrimidine phosphate synthase from Schizosaccharomyces pombe (strain 972 / ATCC 24843) (Fission yeast).